Reading from the N-terminus, the 790-residue chain is Phenylalanine--tRNA ligase beta subunit (790 aa).

Residues 39–147 (AKPFSGIVVG…ADAPVGVDVR (109 aa)) form the tRNA-binding domain. A B5 domain is found at 400-476 (PAKALVNLRH…RLYGYNKLPV (77 aa)). Mg(2+) is bound by residues D454, D460, E463, and E464. Residues 696-789 (SRFPEIRRDL…LGNRFGASLR (94 aa)) enclose the FDX-ACB domain.

It belongs to the phenylalanyl-tRNA synthetase beta subunit family. Type 1 subfamily. As to quaternary structure, tetramer of two alpha and two beta subunits. It depends on Mg(2+) as a cofactor.

The protein resides in the cytoplasm. The enzyme catalyses tRNA(Phe) + L-phenylalanine + ATP = L-phenylalanyl-tRNA(Phe) + AMP + diphosphate + H(+). This is Phenylalanine--tRNA ligase beta subunit from Hahella chejuensis (strain KCTC 2396).